A 338-amino-acid polypeptide reads, in one-letter code: Ferredoxin--NADP reductase (338 aa).

FAD-binding residues include Asp38, Gln46, Tyr51, Val91, Phe125, Asp291, and Thr331.

This sequence belongs to the ferredoxin--NADP reductase type 2 family. In terms of assembly, homodimer. The cofactor is FAD.

The enzyme catalyses 2 reduced [2Fe-2S]-[ferredoxin] + NADP(+) + H(+) = 2 oxidized [2Fe-2S]-[ferredoxin] + NADPH. The sequence is that of Ferredoxin--NADP reductase from Orientia tsutsugamushi (strain Ikeda) (Rickettsia tsutsugamushi).